The primary structure comprises 312 residues: Olfactory receptor 6X1 (312 aa).

Residues 1 to 23 lie on the Extracellular side of the membrane; sequence MRNGTVITEFILLGFPVIQGLQT. N-linked (GlcNAc...) asparagine glycosylation occurs at asparagine 3. A helical transmembrane segment spans residues 24–44; sequence PLFIAIFLTYILTLAGNGLII. At 45-52 the chain is on the cytoplasmic side; it reads ATVWAEPR. Residues 53–73 form a helical membrane-spanning segment; the sequence is LQIPMYFFLCNLSFLEIWYTT. The Extracellular segment spans residues 74 to 97; that stretch reads TVIPKLLGTFVVARTVICMSCCLL. Cysteine 95 and cysteine 187 are oxidised to a cystine. Residues 98–118 traverse the membrane as a helical segment; it reads QAFFHFFVGTTEFLILTIMSF. Residues 119–137 are Cytoplasmic-facing; the sequence is DRYLTICNPLHHPTIMTSK. A helical transmembrane segment spans residues 138 to 158; the sequence is LCLQLALSSWVVGFTIVFCQT. Residues 159–195 lie on the Extracellular side of the membrane; that stretch reads MLLIQLPFCGNNVISHFYCDVGPSLKAACIDTSILEL. The chain crosses the membrane as a helical span at residues 196 to 215; it reads LGVIATILVIPGSLLFNMIS. Topologically, residues 216–235 are cytoplasmic; that stretch reads YIYILSAILRIPSATGHQKT. Residues 236–256 traverse the membrane as a helical segment; the sequence is FSTCASHLTVVSLLYGAVLFM. At 257-269 the chain is on the extracellular side; it reads YLRPTAHSSFKIN. Residues 270-290 form a helical membrane-spanning segment; it reads KVVSVLNTILTPLLNPFIYTI. Residues 291–312 lie on the Cytoplasmic side of the membrane; that stretch reads RNKEVKGALRKAMTCPKTGHAK.

Belongs to the G-protein coupled receptor 1 family.

Its subcellular location is the cell membrane. Its function is as follows. Odorant receptor. The polypeptide is Olfactory receptor 6X1 (OR6X1) (Homo sapiens (Human)).